The following is a 358-amino-acid chain: DNA replication and repair protein RecF (358 aa).

30 to 37 (GANGSGKT) contributes to the ATP binding site.

Belongs to the RecF family.

It is found in the cytoplasm. Functionally, the RecF protein is involved in DNA metabolism; it is required for DNA replication and normal SOS inducibility. RecF binds preferentially to single-stranded, linear DNA. It also seems to bind ATP. This chain is DNA replication and repair protein RecF, found in Edwardsiella ictaluri (strain 93-146).